We begin with the raw amino-acid sequence, 483 residues long: GTPase Der (483 aa).

EngA-type G domains lie at 3–167 (FTLA…GEER) and 212–387 (LRIA…EIWN). Residues 9–16 (GRPNVGKS), 56–60 (DTAGL), 119–122 (NKAE), 218–225 (GRPNAGKS), 265–269 (DTAGM), and 330–333 (NKWD) contribute to the GTP site. The KH-like domain maps to 388-472 (RRISTGRLNR…PIRLSLRTSD (85 aa)).

Belongs to the TRAFAC class TrmE-Era-EngA-EngB-Septin-like GTPase superfamily. EngA (Der) GTPase family. In terms of assembly, associates with the 50S ribosomal subunit.

Its function is as follows. GTPase that plays an essential role in the late steps of ribosome biogenesis. The protein is GTPase Der of Brucella suis (strain ATCC 23445 / NCTC 10510).